Consider the following 307-residue polypeptide: Porphobilinogen deaminase (307 aa).

Position 241 is an S-(dipyrrolylmethanemethyl)cysteine (C241).

The protein belongs to the HMBS family. In terms of assembly, monomer. Requires dipyrromethane as cofactor.

It catalyses the reaction 4 porphobilinogen + H2O = hydroxymethylbilane + 4 NH4(+). It functions in the pathway porphyrin-containing compound metabolism; protoporphyrin-IX biosynthesis; coproporphyrinogen-III from 5-aminolevulinate: step 2/4. Tetrapolymerization of the monopyrrole PBG into the hydroxymethylbilane pre-uroporphyrinogen in several discrete steps. The protein is Porphobilinogen deaminase of Macrococcus caseolyticus (strain JCSC5402) (Macrococcoides caseolyticum).